The primary structure comprises 319 residues: Ribonucleoside-diphosphate reductase small chain (319 aa).

Positions 70, 101, and 104 each coordinate Fe cation. Tyrosine 108 is an active-site residue. Residues glutamate 163, glutamate 197, and histidine 200 each coordinate Fe cation. The tract at residues 313 to 319 (FSLDVDF) is interaction with R1.

The protein belongs to the ribonucleoside diphosphate reductase small chain family. In terms of assembly, interacts with RNR1/OPG080 subunit. Can interact with host RNR1 supunit. Requires Fe cation as cofactor.

The catalysed reaction is a 2'-deoxyribonucleoside 5'-diphosphate + [thioredoxin]-disulfide + H2O = a ribonucleoside 5'-diphosphate + [thioredoxin]-dithiol. In terms of biological role, ribonucleoside-diphosphate reductase holoenzyme provides the precursors necessary for viral DNA synthesis. Allows virus growth in non-dividing cells. Catalyzes the biosynthesis of deoxyribonucleotides from the corresponding ribonucleotides. This is Ribonucleoside-diphosphate reductase small chain (OPG048) from Bos taurus (Bovine).